Consider the following 204-residue polypeptide: ATP-dependent Clp protease proteolytic subunit (204 aa).

Ser101 (nucleophile) is an active-site residue. His126 is an active-site residue.

Belongs to the peptidase S14 family. In terms of assembly, fourteen ClpP subunits assemble into 2 heptameric rings which stack back to back to give a disk-like structure with a central cavity, resembling the structure of eukaryotic proteasomes.

The protein localises to the cytoplasm. The enzyme catalyses Hydrolysis of proteins to small peptides in the presence of ATP and magnesium. alpha-casein is the usual test substrate. In the absence of ATP, only oligopeptides shorter than five residues are hydrolyzed (such as succinyl-Leu-Tyr-|-NHMec, and Leu-Tyr-Leu-|-Tyr-Trp, in which cleavage of the -Tyr-|-Leu- and -Tyr-|-Trp bonds also occurs).. In terms of biological role, cleaves peptides in various proteins in a process that requires ATP hydrolysis. Has a chymotrypsin-like activity. Plays a major role in the degradation of misfolded proteins. The protein is ATP-dependent Clp protease proteolytic subunit of Deinococcus radiodurans (strain ATCC 13939 / DSM 20539 / JCM 16871 / CCUG 27074 / LMG 4051 / NBRC 15346 / NCIMB 9279 / VKM B-1422 / R1).